A 290-amino-acid chain; its full sequence is 3-hydroxyacyl-thioester dehydratase Y (290 aa).

The segment at 147–169 (FGGARGERPAAPEFPDRHPDARI) is disordered. Basic and acidic residues predominate over residues 151–169 (RGERPAAPEFPDRHPDARI). The region spanning 161–271 (PDRHPDARID…AVFRTEVAGS (111 aa)) is the MaoC-like domain.

Belongs to the enoyl-CoA hydratase/isomerase family.

It catalyses the reaction a (3R)-3-hydroxyacyl-CoA = a (2E)-enoyl-CoA + H2O. The catalysed reaction is (3R)-hydroxyhexanoyl-CoA = (2E)-hexenoyl-CoA + H2O. It carries out the reaction (2E)-octenoyl-CoA + H2O = (3R)-hydroxyoctanoyl-CoA. The enzyme catalyses (3R)-3-hydroxydecanoyl-CoA = (2E)-decenoyl-CoA + H2O. It catalyses the reaction (3R)-3-hydroxydodecanoyl-CoA = (2E)-dodecenoyl-CoA + H2O. The catalysed reaction is (3R)-hydroxyhexadecanoyl-CoA = (2E)-hexadecenoyl-CoA + H2O. Shows trans-enoyl-CoA hydratase/3-hydroxyacyl-CoA dehydratase activity. In vitro, can hydrate various enoyl-CoA such as (2E)-hexenoyl-CoA, (2E)-octenoyl-CoA, (2E)-decenoyl-CoA, (2E)-dodecenoyl-CoA and (2E)-hexadecenoyl-CoA. May contribute to the persistence of the tuberculosis infection by inducing COX-2 expression in macrophages through MAPK-NF-kappaB signaling pathway. The chain is 3-hydroxyacyl-thioester dehydratase Y from Mycobacterium tuberculosis (strain ATCC 25618 / H37Rv).